A 1196-amino-acid chain; its full sequence is NACHT, LRR and PYD domains-containing protein 1b allele 5 (1196 aa).

The segment at 1–22 is disordered; that stretch reads MEESPPKQKSNTKVTQHEGQQD. In terms of domain architecture, NACHT spans 126-435; sequence QLVIIEGAAG…EFFAAISCIL (310 aa). 132–139 lines the ATP pocket; the sequence is GAAGIGKS. LRR repeat units follow at residues 627-647 and 684-704; these read NLEG…QSLC and SLTE…RMLC. Residues 789-922 are ZU5; that stretch reads FWGPTGPVAT…GYTVLKNPSF (134 aa). One can recognise an FIIND domain in the interval 789–1072; it reads FWGPTGPVAT…KFDHLCDQEF (284 aa). A UPA region spans residues 923 to 1072; that stretch reads SPMGVVLRII…KFDHLCDQEF (150 aa). The CARD domain maps to 1106–1189; the sequence is HFMDQHREQL…HLVMDLFEKS (84 aa).

Belongs to the NLRP family. Interacts with DPP9; leading to inhibit activation of the inflammasome. DPP9 acts via formation of a ternary complex, composed of a DPP9 homodimer, one full-length Nlrp1b protein, and one cleaved C-terminus of Nlrp1b (NACHT, LRR and PYD domains-containing protein 1b, C-terminus). Interacts with DPP8; leading to inhibit activation of the inflammasome, probably via formation of a ternary complex with DPP8. Interacts (via LRR repeats) with BCL2 and BCL2L1 (via the loop between motifs BH4 and BH3). Interacts with NOD2; this interaction may increase IL1B release. Interacts with EIF2AK2/PKR; this interaction requires EIF2AK2 activity, is accompanied by EIF2AK2 autophosphorylation and promotes inflammasome assembly in response to B.anthracis lethal toxin. Interacts with MEFV; this interaction targets Nlrp1b to degradation by autophagy, hence preventing excessive IL1B- and IL18-mediated inflammation. In terms of assembly, interacts with the C-terminal part of Nlrp1b (NACHT, LRR and PYD domains-containing protein 1b, C-terminus) in absence of pathogens and other damage-associated signals. As to quaternary structure, interacts with the N-terminal part of Nlrp1b (NACHT, LRR and PYD domains-containing protein 1b, N-terminus) in absence of pathogens and other damage-associated signals. Homomultimer; forms the Nlrp1b inflammasome polymeric complex, a filament composed of homopolymers of this form in response to pathogens and other damage-associated signals. The Nlrp1b inflammasome polymeric complex directly recruits pro-caspase-1 (proCASP1) independently of PYCARD/ASC. Interacts (via CARD domain) with CASP1 (via CARD domain); leading to CASP1 activation. Post-translationally, autocatalytically cleaved. Autocatalytic cleavage in FIIND region occurs constitutively, prior to activation signals, and is required for inflammasome activity (IL1B release), possibly by facilitating CASP1 binding. Both N- and C-terminal parts remain associated non-covalently. Ubiquitinated by the N-end rule pathway in response to pathogens and other damage-associated signals, leading to its degradation by the proteasome and subsequent release of the cleaved C-terminal part of the protein (NACHT, LRR and PYD domains-containing protein 1b, C-terminus), which polymerizes and forms the Nlrp1b inflammasome. In terms of processing, (Microbial infection) Cleavage by B.anthracis lethal toxin (LT) endopeptidase promotes ubiquitination and degradation of the N-terminal part, releasing the cleaved C-terminal part of the protein (NACHT, LRR and PYD domains-containing protein 1b, C-terminus), which polymerizes and forms the Nlrp1b inflammasome. In terms of tissue distribution, expressed in macrophages.

It is found in the cytoplasm. It localises to the cytosol. Its subcellular location is the inflammasome. With respect to regulation, activated by cleavage by B.anthracis lethal toxin (LT) endopeptidase. Cleavage by LT promotes ubiquitination and degradation of the N-terminal part, releasing the cleaved C-terminal part of the protein (NACHT, LRR and PYD domains-containing protein 1b, C-terminus), which polymerizes and forms the Nlrp1b inflammasome. Nlrp1b inflammasome is inhibited by DPP8 and DPP9, which sequester the C-terminal fragment of Nlrp1b (NACHT, LRR and PYD domains-containing protein 1b, C-terminus) in a ternary complex, thereby preventing Nlrp1b oligomerization and activation. Nlrp1b inflammasome is activated by Val-boroPro (Talabostat, PT-100), an inhibitor of dipeptidyl peptidases DPP8 and DPP9. Val-boroPro relieves inhibition of DPP8 and/or DPP9 by promoting disruption of the ternary complex, releasing its C-terminal part from autoinhibition. Activated by metabolic inhibitors, such as 2-deoxy-D-glucose and sodium azide. Not activated by muramyl dipeptide, nor by full-length bacterial peptidoglycan. Functionally, acts as the sensor component of the Nlrp1b inflammasome, which mediates inflammasome activation in response to various pathogen-associated signals, leading to subsequent pyroptosis. Inflammasomes are supramolecular complexes that assemble in the cytosol in response to pathogens and other damage-associated signals and play critical roles in innate immunity and inflammation. Acts as a recognition receptor (PRR): recognizes specific pathogens and other damage-associated signals, such as B.anthracis lethal toxin (LT) or Val-boroPro inhibitor, and mediates the formation of the inflammasome polymeric complex. In response to pathogen-associated signals, the N-terminal part of Nlrp1b is degraded by the proteasome, releasing the cleaved C-terminal part of the protein (NACHT, LRR and PYD domains-containing protein 1b, C-terminus), which polymerizes to initiate the formation of the inflammasome complex: the inflammasome directly recruits pro-caspase-1 (proCASP1) independently of PYCARD/ASC and promotes caspase-1 (CASP1) activation, which subsequently cleaves and activates inflammatory cytokines IL1B and IL18 and gasdermin-D (GSDMD), leading to pyroptosis. In the absence of GSDMD expression, the Nlrp1b inflammasome is able to recruit and activate CASP8, leading to activation of gasdermin-E (GSDME). Activation of Nlrp1b inflammasome is also required for HMGB1 secretion; the active cytokines and HMGB1 stimulate inflammatory responses. Primary mediator of macrophage susceptibility to B.anthracis LT: in response to B.anthracis infection, macrophages and dendritic cells release IL1B and undergo pyroptosis. This early inflammatory response to the toxin increases resistance to infection by B.anthracis spores. Its function is as follows. Constitutes the precursor of the Nlrp1b inflammasome, which mediates autoproteolytic processing within the FIIND domain to generate the N-terminal and C-terminal parts, which are associated non-covalently in absence of pathogens and other damage-associated signals. In terms of biological role, regulatory part that prevents formation of the Nlrp1b inflammasome: in absence of pathogens and other damage-associated signals, interacts with the C-terminal part of Nlrp1b (NACHT, LRR and PYD domains-containing protein 1b, C-terminus), preventing activation of the Nlrp1b inflammasome. In response to pathogen-associated signals, this part is ubiquitinated by the N-end rule pathway and degraded by the proteasome, releasing the cleaved C-terminal part of the protein, which polymerizes and forms the Nlrp1b inflammasome. Constitutes the active part of the Nlrp1b inflammasome. In absence of pathogens and other damage-associated signals, interacts with the N-terminal part of Nlrp1b (NACHT, LRR and PYD domains-containing protein 1b, N-terminus), preventing activation of the Nlrp1b inflammasome. In response to pathogen-associated signals, the N-terminal part of Nlrp1b is degraded by the proteasome, releasing this form, which polymerizes to form the Nlrp1b inflammasome complex: the Nlrp1b inflammasome complex then directly recruits pro-caspase-1 (proCASP1) and promotes caspase-1 (CASP1) activation, leading to gasdermin-D (GSDMD) cleavage and subsequent pyroptosis. The chain is NACHT, LRR and PYD domains-containing protein 1b allele 5 (Nlrp1b) from Mus musculus (Mouse).